A 439-amino-acid polypeptide reads, in one-letter code: Adenylosuccinate synthetase (439 aa).

GTP is bound by residues 25 to 31, 53 to 55, and K62; these read GDEGKGK and GHT. D26 (proton acceptor) is an active-site residue. Mg(2+)-binding residues include D26 and G53. IMP-binding positions include 26 to 29 and 51 to 54; these read DEGK and NAGH. The active-site Proton donor is H54. T141, R155, N232, and T247 together coordinate IMP. Residue T307 participates in GTP binding. Residue 307 to 313 participates in substrate binding; sequence TTTNRPR. IMP is bound at residue R311. GTP is bound by residues R313, 339 to 341, and 425 to 427; these read KLD and GVG.

Belongs to the adenylosuccinate synthetase family. Homodimer. The cofactor is Mg(2+).

The protein localises to the cytoplasm. It carries out the reaction IMP + L-aspartate + GTP = N(6)-(1,2-dicarboxyethyl)-AMP + GDP + phosphate + 2 H(+). It participates in purine metabolism; AMP biosynthesis via de novo pathway; AMP from IMP: step 1/2. In terms of biological role, plays an important role in the salvage pathway for purine nucleotide biosynthesis. Catalyzes the first committed step in the biosynthesis of AMP from IMP. This chain is Adenylosuccinate synthetase, found in Plasmodium yoelii yoelii.